Consider the following 313-residue polypeptide: Ribosomal RNA small subunit methyltransferase H (313 aa).

S-adenosyl-L-methionine is bound by residues 35–37 (GGH), aspartate 55, phenylalanine 79, aspartate 101, and glutamine 108.

This sequence belongs to the methyltransferase superfamily. RsmH family.

Its subcellular location is the cytoplasm. It catalyses the reaction cytidine(1402) in 16S rRNA + S-adenosyl-L-methionine = N(4)-methylcytidine(1402) in 16S rRNA + S-adenosyl-L-homocysteine + H(+). Functionally, specifically methylates the N4 position of cytidine in position 1402 (C1402) of 16S rRNA. In Escherichia coli O127:H6 (strain E2348/69 / EPEC), this protein is Ribosomal RNA small subunit methyltransferase H.